An 891-amino-acid chain; its full sequence is Translation initiation factor IF-2 (891 aa).

The 170-residue stretch at 390-559 (NRAPIVTIMG…LLQSDMLELK (170 aa)) folds into the tr-type G domain. The interval 399–406 (GHVDHGKT) is G1. 399 to 406 (GHVDHGKT) is a GTP binding site. The segment at 424–428 (GITQS) is G2. A G3 region spans residues 445–448 (DTPG). Residues 445 to 449 (DTPGH) and 499 to 502 (NKID) contribute to the GTP site. Residues 499–502 (NKID) form a G4 region. The interval 535-537 (SAT) is G5.

The protein belongs to the TRAFAC class translation factor GTPase superfamily. Classic translation factor GTPase family. IF-2 subfamily.

The protein localises to the cytoplasm. Functionally, one of the essential components for the initiation of protein synthesis. Protects formylmethionyl-tRNA from spontaneous hydrolysis and promotes its binding to the 30S ribosomal subunits. Also involved in the hydrolysis of GTP during the formation of the 70S ribosomal complex. The polypeptide is Translation initiation factor IF-2 (Blochmanniella pennsylvanica (strain BPEN)).